Here is a 201-residue protein sequence, read N- to C-terminus: Ran-specific GTPase-activating protein 1 (201 aa).

Basic and acidic residues-rich tracts occupy residues 1–17 and 32–66; these read MSSE…EEAA and KKAE…IHFE. Residues 1 to 66 are disordered; that stretch reads MSSEDKKPVV…APESPDIHFE (66 aa). Residue Ser60 is modified to Phosphoserine. In terms of domain architecture, RanBD1 spans 64 to 200; the sequence is HFEPVVHLEK…FEKAQEINKK (137 aa).

It belongs to the RANBP1 family. In terms of assembly, interacts with GSP1 and PRP20.

The protein resides in the cytoplasm. It localises to the nucleus. Its function is as follows. Important for the export of protein containing nuclear export signal (NES) out of the nucleus. Stimulates the GTPase activity of GSP1 and GSP2. The polypeptide is Ran-specific GTPase-activating protein 1 (YRB1) (Saccharomyces cerevisiae (strain ATCC 204508 / S288c) (Baker's yeast)).